The following is a 511-amino-acid chain: Sodium/proline symporter 2 (511 aa).

Helical transmembrane passes span 16-36 (WQTY…GYYG), 54-74 (IGPY…WMIM), 85-105 (LSAM…YFVV), 139-159 (IISG…GFVS), 175-195 (GLLM…YLAV), 204-224 (VIML…LNGI), 246-266 (VLGI…PHII), 286-306 (ISWM…GIAF), 327-347 (ILFH…AIMS), 381-401 (FLMV…WIAW), 410-430 (LVGN…IFSL), 438-458 (TGAL…IVWI), and 467-487 (LFGM…TYFV).

Belongs to the sodium:solute symporter (SSF) (TC 2.A.21) family.

The protein resides in the cell membrane. It catalyses the reaction L-proline(in) + Na(+)(in) = L-proline(out) + Na(+)(out). Its function is as follows. Catalyzes the sodium-dependent uptake of extracellular L-proline. The protein is Sodium/proline symporter 2 (putP2) of Staphylococcus saprophyticus subsp. saprophyticus (strain ATCC 15305 / DSM 20229 / NCIMB 8711 / NCTC 7292 / S-41).